The primary structure comprises 363 residues: Phosphoserine aminotransferase (363 aa).

R42 provides a ligand contact to L-glutamate. Pyridoxal 5'-phosphate-binding positions include 76 to 77, W101, T151, D170, and Q193; that span reads AS. K194 is modified (N6-(pyridoxal phosphate)lysine). 234–235 is a binding site for pyridoxal 5'-phosphate; that stretch reads NT.

The protein belongs to the class-V pyridoxal-phosphate-dependent aminotransferase family. SerC subfamily. In terms of assembly, homodimer. Pyridoxal 5'-phosphate is required as a cofactor.

It localises to the cytoplasm. It catalyses the reaction O-phospho-L-serine + 2-oxoglutarate = 3-phosphooxypyruvate + L-glutamate. It carries out the reaction 4-(phosphooxy)-L-threonine + 2-oxoglutarate = (R)-3-hydroxy-2-oxo-4-phosphooxybutanoate + L-glutamate. It participates in amino-acid biosynthesis; L-serine biosynthesis; L-serine from 3-phospho-D-glycerate: step 2/3. In terms of biological role, catalyzes the reversible conversion of 3-phosphohydroxypyruvate to phosphoserine and of 3-hydroxy-2-oxo-4-phosphonooxybutanoate to phosphohydroxythreonine. The sequence is that of Phosphoserine aminotransferase from Listeria innocua serovar 6a (strain ATCC BAA-680 / CLIP 11262).